A 301-amino-acid chain; its full sequence is Rhodopsin (301 aa).

The Extracellular portion of the chain corresponds to 1-18 (LHMIHLHWYQYPPMNPMM). A helical transmembrane segment spans residues 19–43 (YPLLLIFMLFTGILCLAGNFVTIWV). The Cytoplasmic portion of the chain corresponds to 44-55 (FMNTKSLRTPAN). A helical transmembrane segment spans residues 56–78 (LLVVNLAMSDFLMMFTMFPPMMV). Topologically, residues 79 to 92 (TCYYHTWTLGPTFC) are extracellular. An intrachain disulfide couples Cys92 to Cys169. Residues 93-115 (QVYAFLGNLCGCASIWTMVFITF) traverse the membrane as a helical segment. The short motif at 116-118 (DRY) is the 'Ionic lock' involved in activated form stabilization element. Over 116–134 (DRYNVIVKGVAGEPLSTKK) the chain is Cytoplasmic. A helical membrane pass occupies residues 135-155 (ASLWILSVWVLSTAWCIAPFF). The Extracellular segment spans residues 156-182 (GWNHYVPEGNLTGCGTDYLSEDILSRS). Residue Asn165 is glycosylated (N-linked (GlcNAc...) asparagine). The chain crosses the membrane as a helical span at residues 183-204 (YLYIYSTWVYFLPLAITIYCYV). Residues 205–245 (FIIKAVAAHEKGMRDQAKKMGIKSLRNEEAQKTSAECRLAK) lie on the Cytoplasmic side of the membrane. Residues 246 to 267 (NAMTTVALWFIAWTPCLLINWV) form a helical membrane-spanning segment. Over 268–278 (GMFARSYLSPV) the chain is Extracellular. A helical membrane pass occupies residues 279-300 (YTIWGYVFAKANAVYNPIVYAI). At Lys288 the chain carries N6-(retinylidene)lysine.

It belongs to the G-protein coupled receptor 1 family. Opsin subfamily. As to quaternary structure, homodimer. Interacts with GNAQ. In terms of processing, contains one covalently linked retinal chromophore.

Its subcellular location is the cell projection. It is found in the rhabdomere membrane. Photoreceptor required for image-forming vision at low light intensity. Can use both retinal and 3-dehydroretinal as visual pigment. Light-induced isomerization of 11-cis to all-trans retinal triggers a conformational change that activates signaling via G-proteins. Signaling via GNAQ probably mediates the activation of phospholipase C. The chain is Rhodopsin (RHO) from Cambarus hubrichti (Salem cave crayfish).